We begin with the raw amino-acid sequence, 701 residues long: Elongation factor G (701 aa).

Residues 8 to 286 form the tr-type G domain; the sequence is DRVRNIGIIA…AVVLLLPSPL (279 aa). GTP-binding positions include 17–24, 85–89, and 139–142; these read AHIDAGKT, DTPGH, and NKMD.

Belongs to the TRAFAC class translation factor GTPase superfamily. Classic translation factor GTPase family. EF-G/EF-2 subfamily.

It is found in the cytoplasm. Its function is as follows. Catalyzes the GTP-dependent ribosomal translocation step during translation elongation. During this step, the ribosome changes from the pre-translocational (PRE) to the post-translocational (POST) state as the newly formed A-site-bound peptidyl-tRNA and P-site-bound deacylated tRNA move to the P and E sites, respectively. Catalyzes the coordinated movement of the two tRNA molecules, the mRNA and conformational changes in the ribosome. The polypeptide is Elongation factor G (Herpetosiphon aurantiacus (strain ATCC 23779 / DSM 785 / 114-95)).